Consider the following 444-residue polypeptide: Phosphoglucosamine mutase (444 aa).

Ser-102 acts as the Phosphoserine intermediate in catalysis. Positions 102, 241, 243, and 245 each coordinate Mg(2+). Residue Ser-102 is modified to Phosphoserine.

Belongs to the phosphohexose mutase family. It depends on Mg(2+) as a cofactor. In terms of processing, activated by phosphorylation.

It catalyses the reaction alpha-D-glucosamine 1-phosphate = D-glucosamine 6-phosphate. Functionally, catalyzes the conversion of glucosamine-6-phosphate to glucosamine-1-phosphate. The polypeptide is Phosphoglucosamine mutase (Actinobacillus pleuropneumoniae serotype 7 (strain AP76)).